A 623-amino-acid polypeptide reads, in one-letter code: Glutathione import ATP-binding protein GsiA (623 aa).

ABC transporter domains lie at 15–269 and 325–564; these read VSGL…QTLL and LRSG…RKLM. Residues 49–56 and 357–364 each bind ATP; these read GESGSGKS.

It belongs to the ABC transporter superfamily. Glutathione importer (TC 3.A.1.5.11) family. As to quaternary structure, the complex is composed of two ATP-binding proteins (GsiA), two transmembrane proteins (GsiC and GsiD) and a solute-binding protein (GsiB).

It localises to the cell inner membrane. The enzyme catalyses glutathione(out) + ATP + H2O = glutathione(in) + ADP + phosphate + H(+). Its function is as follows. Part of the ABC transporter complex GsiABCD involved in glutathione import. Responsible for energy coupling to the transport system. In Salmonella paratyphi A (strain ATCC 9150 / SARB42), this protein is Glutathione import ATP-binding protein GsiA.